The following is a 579-amino-acid chain: Protein inscuteable homolog (579 aa).

The tract at residues 74–89 (SVQRWMEDLKLMTECE) is important for interaction with GPSM2. The PDZ-binding signature appears at 576-579 (ESFV).

As to quaternary structure, interacts with ALS2CR19/PAR3B and F2RL2/PAR3. Interacts with GPSM1/AGS3 and GPSM2/LGN (via TPR repeat region). Identified in a complex with GPSM2 and F2RL2. In terms of tissue distribution, isoform 1 is expressed in various tissues with stronger expression in liver, kidney and small intestine. Isoform 2 is abundantly expressed in small intestine and to a lower extent in lung and pancreas.

The protein resides in the cytoplasm. The protein localises to the cell cortex. Its function is as follows. May function as an adapter linking the Par3 complex to the GPSM1/GPSM2 complex. Involved in spindle orientation during mitosis. May regulate cell proliferation and differentiation in the developing nervous system. May play a role in the asymmetric division of fibroblasts and participate in the process of stratification of the squamous epithelium. The chain is Protein inscuteable homolog (INSC) from Homo sapiens (Human).